The sequence spans 166 residues: Small ribosomal subunit protein uS5 (166 aa).

The S5 DRBM domain maps to 11 to 74; it reads LQEKLIAVNR…EKARRNMINV (64 aa).

The protein belongs to the universal ribosomal protein uS5 family. As to quaternary structure, part of the 30S ribosomal subunit. Contacts proteins S4 and S8.

Functionally, with S4 and S12 plays an important role in translational accuracy. Its function is as follows. Located at the back of the 30S subunit body where it stabilizes the conformation of the head with respect to the body. The chain is Small ribosomal subunit protein uS5 from Actinobacillus pleuropneumoniae serotype 5b (strain L20).